The following is a 75-amino-acid chain: Small ribosomal subunit protein bS18c (75 aa).

It belongs to the bacterial ribosomal protein bS18 family. In terms of assembly, part of the 30S ribosomal subunit.

It is found in the plastid. It localises to the chloroplast. The sequence is that of Small ribosomal subunit protein bS18c from Psilotum nudum (Whisk fern).